The chain runs to 356 residues: Biotin synthase (356 aa).

Residues 54–278 (GEVQLCTLLS…VAVARITMPL (225 aa)) form the Radical SAM core domain. Residues C69, C73, and C76 each contribute to the [4Fe-4S] cluster site. [2Fe-2S] cluster contacts are provided by C113, C144, C204, and R282.

Belongs to the radical SAM superfamily. Biotin synthase family. As to quaternary structure, homodimer. [4Fe-4S] cluster is required as a cofactor. Requires [2Fe-2S] cluster as cofactor.

The enzyme catalyses (4R,5S)-dethiobiotin + (sulfur carrier)-SH + 2 reduced [2Fe-2S]-[ferredoxin] + 2 S-adenosyl-L-methionine = (sulfur carrier)-H + biotin + 2 5'-deoxyadenosine + 2 L-methionine + 2 oxidized [2Fe-2S]-[ferredoxin]. Its pathway is cofactor biosynthesis; biotin biosynthesis; biotin from 7,8-diaminononanoate: step 2/2. Catalyzes the conversion of dethiobiotin (DTB) to biotin by the insertion of a sulfur atom into dethiobiotin via a radical-based mechanism. The polypeptide is Biotin synthase (Novosphingobium aromaticivorans (strain ATCC 700278 / DSM 12444 / CCUG 56034 / CIP 105152 / NBRC 16084 / F199)).